The following is a 284-amino-acid chain: Bifunctional protein FolD (284 aa).

NADP(+)-binding positions include 166–168 (GRS) and Ser-191.

Belongs to the tetrahydrofolate dehydrogenase/cyclohydrolase family. In terms of assembly, homodimer.

The enzyme catalyses (6R)-5,10-methylene-5,6,7,8-tetrahydrofolate + NADP(+) = (6R)-5,10-methenyltetrahydrofolate + NADPH. It carries out the reaction (6R)-5,10-methenyltetrahydrofolate + H2O = (6R)-10-formyltetrahydrofolate + H(+). Its pathway is one-carbon metabolism; tetrahydrofolate interconversion. Its function is as follows. Catalyzes the oxidation of 5,10-methylenetetrahydrofolate to 5,10-methenyltetrahydrofolate and then the hydrolysis of 5,10-methenyltetrahydrofolate to 10-formyltetrahydrofolate. This is Bifunctional protein FolD from Leptospira interrogans serogroup Icterohaemorrhagiae serovar copenhageni (strain Fiocruz L1-130).